The chain runs to 272 residues: Dermonecrotic toxin LvSicTox-alphaIC1bi (272 aa).

Histidine 5 is a catalytic residue. Positions 25 and 27 each coordinate Mg(2+). Histidine 41 acts as the Nucleophile in catalysis. Disulfide bonds link cysteine 45-cysteine 51 and cysteine 47-cysteine 189. Aspartate 84 is a binding site for Mg(2+).

The protein belongs to the arthropod phospholipase D family. Class II subfamily. Mg(2+) serves as cofactor. Expressed by the venom gland.

The protein resides in the secreted. It carries out the reaction an N-(acyl)-sphingosylphosphocholine = an N-(acyl)-sphingosyl-1,3-cyclic phosphate + choline. The enzyme catalyses an N-(acyl)-sphingosylphosphoethanolamine = an N-(acyl)-sphingosyl-1,3-cyclic phosphate + ethanolamine. It catalyses the reaction a 1-acyl-sn-glycero-3-phosphocholine = a 1-acyl-sn-glycero-2,3-cyclic phosphate + choline. The catalysed reaction is a 1-acyl-sn-glycero-3-phosphoethanolamine = a 1-acyl-sn-glycero-2,3-cyclic phosphate + ethanolamine. Functionally, dermonecrotic toxins cleave the phosphodiester linkage between the phosphate and headgroup of certain phospholipids (sphingolipid and lysolipid substrates), forming an alcohol (often choline) and a cyclic phosphate. This toxin acts on sphingomyelin (SM). It may also act on ceramide phosphoethanolamine (CPE), lysophosphatidylcholine (LPC) and lysophosphatidylethanolamine (LPE), but not on lysophosphatidylserine (LPS), and lysophosphatidylglycerol (LPG). It acts by transphosphatidylation, releasing exclusively cyclic phosphate products as second products. Induces dermonecrosis, hemolysis, increased vascular permeability, edema, inflammatory response, and platelet aggregation. The protein is Dermonecrotic toxin LvSicTox-alphaIC1bi of Loxosceles variegata (Recluse spider).